A 119-amino-acid chain; its full sequence is Ribonuclease P protein component (119 aa).

This sequence belongs to the RnpA family. Consists of a catalytic RNA component (M1 or rnpB) and a protein subunit.

It catalyses the reaction Endonucleolytic cleavage of RNA, removing 5'-extranucleotides from tRNA precursor.. RNaseP catalyzes the removal of the 5'-leader sequence from pre-tRNA to produce the mature 5'-terminus. It can also cleave other RNA substrates such as 4.5S RNA. The protein component plays an auxiliary but essential role in vivo by binding to the 5'-leader sequence and broadening the substrate specificity of the ribozyme. This Corynebacterium diphtheriae (strain ATCC 700971 / NCTC 13129 / Biotype gravis) protein is Ribonuclease P protein component.